The sequence spans 428 residues: 3-phosphoshikimate 1-carboxyvinyltransferase (428 aa).

3 residues coordinate 3-phosphoshikimate: K23, S24, and R28. K23 provides a ligand contact to phosphoenolpyruvate. Residues G97 and R125 each coordinate phosphoenolpyruvate. 3-phosphoshikimate is bound by residues S170, S171, Q172, S198, D314, N337, and K341. Q172 provides a ligand contact to phosphoenolpyruvate. The active-site Proton acceptor is the D314. The phosphoenolpyruvate site is built by R345, R387, and K412.

This sequence belongs to the EPSP synthase family. Monomer.

The protein localises to the cytoplasm. It carries out the reaction 3-phosphoshikimate + phosphoenolpyruvate = 5-O-(1-carboxyvinyl)-3-phosphoshikimate + phosphate. The protein operates within metabolic intermediate biosynthesis; chorismate biosynthesis; chorismate from D-erythrose 4-phosphate and phosphoenolpyruvate: step 6/7. Functionally, catalyzes the transfer of the enolpyruvyl moiety of phosphoenolpyruvate (PEP) to the 5-hydroxyl of shikimate-3-phosphate (S3P) to produce enolpyruvyl shikimate-3-phosphate and inorganic phosphate. This Yersinia pseudotuberculosis serotype IB (strain PB1/+) protein is 3-phosphoshikimate 1-carboxyvinyltransferase.